The following is a 327-amino-acid chain: uncharacterized protein (327 aa).

The N-terminal stretch at 1-23 (MGGGRLPPLWLPLLIAWSEWGNC) is a signal peptide. 2 N-linked (GlcNAc...) asparagine; by host glycosylation sites follow: N144 and N239. A disordered region spans residues 298–327 (EESEAAEETAAGEASAVAAAAVSEEEQRRE). The span at 305-319 (ETAAGEASAVAAAAV) shows a compositional bias: low complexity.

This is an uncharacterized protein from Human cytomegalovirus (strain AD169) (HHV-5).